A 214-amino-acid chain; its full sequence is Thymidylate kinase (214 aa).

10–17 (GIDGCGKT) is an ATP binding site.

This sequence belongs to the thymidylate kinase family.

The catalysed reaction is dTMP + ATP = dTDP + ADP. In terms of biological role, phosphorylation of dTMP to form dTDP in both de novo and salvage pathways of dTTP synthesis. In Prochlorococcus marinus subsp. pastoris (strain CCMP1986 / NIES-2087 / MED4), this protein is Thymidylate kinase.